Reading from the N-terminus, the 225-residue chain is Uracil-DNA glycosylase (225 aa).

The Proton acceptor role is filled by aspartate 65.

This sequence belongs to the uracil-DNA glycosylase (UDG) superfamily. UNG family.

It localises to the cytoplasm. It carries out the reaction Hydrolyzes single-stranded DNA or mismatched double-stranded DNA and polynucleotides, releasing free uracil.. Its function is as follows. Excises uracil residues from the DNA which can arise as a result of misincorporation of dUMP residues by DNA polymerase or due to deamination of cytosine. In Clostridium perfringens (strain 13 / Type A), this protein is Uracil-DNA glycosylase.